The chain runs to 345 residues: MASSTGEKGLIVSFGEMLIDFVPTVSGVSLSESPGFLKAPGGAPANVAIAVSRLGGRAAFVGKLGDDDFGHMLAGILRKNGVDDQGINFDEGARTALAFVTLRSDGEREFMFYRNPSADMLLRPDELNLELIRSAKVFHYGSISLITEPCRSAHMKAMEVAKEAGALLSYDPNLREPLWPSPEEARTQIMSIWDKADIIKVSDVELEFLTENKTMDDKTAMSLWHPNLKLLLVTLGEKGCTYFTKKFHGSVETFHVDAVDTTGAGDSFVGALLQQIVDDQSVLEDEARLRKVLRFANACGAITTTKKGAIPALPTDIEALSFLKDQKKRQTNLKFSKWCCTASPC.

Belongs to the carbohydrate kinase PfkB family.

The enzyme catalyses D-fructose + ATP = D-fructose 6-phosphate + ADP + H(+). It participates in glycan biosynthesis; starch biosynthesis. Its function is as follows. May play an important role in maintaining the flux of carbon towards starch formation. The polypeptide is Probable fructokinase-3 (Arabidopsis thaliana (Mouse-ear cress)).